A 69-amino-acid chain; its full sequence is Dodecin (69 aa).

FMN is bound at residue 3–5; sequence KVY. CoA contacts are provided by residues Lys-6, Arg-28, and 32–34; that span reads TLR. Residues Asp-37, Trp-38, Arg-45, Gln-57, and Arg-65 each coordinate FMN. 65–67 contributes to the CoA binding site; sequence RLE.

It belongs to the dodecin family. Homododecamer; four homotrimers assemble to form a dodecameric hollow sphere with an outer diameter of about 60 Angstroms. Flavin dimers are bound between subunits with a stoichiometry of 6 flavin dimers per dodecamer. Besides, trimeric coenzyme A molecules can be bound between subunits. A dodecamer can bind simultaneously 12 flavin and 12 coenzyme A molecules.

Functionally, may function as storage protein that sequesters various flavins and other cofactors, thereby protecting the cell against undesirable reactions mediated by the free cofactors. Binds and sequesters FMN, FAD, lumiflavin and lumichrome, and can also bind coenzyme A. In Thermus thermophilus (strain ATCC 27634 / DSM 579 / HB8), this protein is Dodecin.